The primary structure comprises 451 residues: Signal recognition particle protein (451 aa).

GTP contacts are provided by residues 107 to 114 (GLQGSGKT), 190 to 194 (DTAGR), and 248 to 251 (TKTD).

Belongs to the GTP-binding SRP family. SRP54 subfamily. Part of the signal recognition particle protein translocation system, which is composed of SRP and FtsY. SRP is a ribonucleoprotein composed of Ffh and a 4.5S RNA molecule.

Its subcellular location is the cytoplasm. The enzyme catalyses GTP + H2O = GDP + phosphate + H(+). Its function is as follows. Involved in targeting and insertion of nascent membrane proteins into the cytoplasmic membrane. Binds to the hydrophobic signal sequence of the ribosome-nascent chain (RNC) as it emerges from the ribosomes. The SRP-RNC complex is then targeted to the cytoplasmic membrane where it interacts with the SRP receptor FtsY. Interaction with FtsY leads to the transfer of the RNC complex to the Sec translocase for insertion into the membrane, the hydrolysis of GTP by both Ffh and FtsY, and the dissociation of the SRP-FtsY complex into the individual components. The protein is Signal recognition particle protein of Buchnera aphidicola subsp. Acyrthosiphon pisum (strain APS) (Acyrthosiphon pisum symbiotic bacterium).